Consider the following 420-residue polypeptide: MSDSGTPAQARISLFVGKGGVGKSTLASATAVCDAGAGQRVLVVSTDQAHSLGDVLGIAVPPTGQGDPVRVLAYDPEAGGGFLDALALDTLALLEGRWLHVVETLDRRFPGSELSSIAPEELCALPGIQEVLGLHAVGELAAARRWDRIVVDCASTADALRMLTLPATFGLYVERAWPRHRRLSIGADDGRSAVLAELLERIRASVERLSTLLTDGALVSAHLVLTPERVVAAEAVRTLGSLALMGVRVEELLVNQLLVQDENYEYRSLPDHPAFHWYAERIGEQRAVLDDLDATIGDVALVLVPHLAGEPIGPKALGGLLDSARRRQGSAPPGPLQPIVDLESGSGLASIYRLRLALPQLDPGTLTLGRADDDLIVSAGGMRRRVRLASVLRRCTVLDAHLRGGELTVRFRPNPEVWPT.

Belongs to the arsA ATPase family.

The sequence is that of Protein Rv2184c from Mycobacterium tuberculosis (strain ATCC 25618 / H37Rv).